We begin with the raw amino-acid sequence, 77 residues long: U8-lycotoxin-Ls1l (77 aa).

A signal peptide spans 1-20; it reads MKLMIFTGLVLFAIVSLIEA. Positions 21–26 are excised as a propeptide; it reads QAENEK.

It belongs to the neurotoxin 19 (CSTX) family. 08 (U8-Lctx) subfamily. Post-translationally, contains 4 disulfide bonds. As to expression, expressed by the venom gland.

It is found in the secreted. The polypeptide is U8-lycotoxin-Ls1l (Lycosa singoriensis (Wolf spider)).